Here is a 645-residue protein sequence, read N- to C-terminus: 1,4-alpha-glucan branching enzyme GlgB (645 aa).

Residue D309 is the Nucleophile of the active site. The active-site Proton donor is E352. The interval 619 to 645 (VKTRKGSKKQDGSKTKVRSNVTSRGKR) is disordered. The span at 636–645 (RSNVTSRGKR) shows a compositional bias: polar residues.

Belongs to the glycosyl hydrolase 13 family. GlgB subfamily. Monomer.

It catalyses the reaction Transfers a segment of a (1-&gt;4)-alpha-D-glucan chain to a primary hydroxy group in a similar glucan chain.. It functions in the pathway glycan biosynthesis; glycogen biosynthesis. Its function is as follows. Catalyzes the formation of the alpha-1,6-glucosidic linkages in glycogen by scission of a 1,4-alpha-linked oligosaccharide from growing alpha-1,4-glucan chains and the subsequent attachment of the oligosaccharide to the alpha-1,6 position. This Bacillus cereus (strain 03BB102) protein is 1,4-alpha-glucan branching enzyme GlgB.